A 354-amino-acid polypeptide reads, in one-letter code: Guanine nucleotide-binding protein alpha-3 subunit (354 aa).

Gly-2 carries the N-myristoyl glycine lipid modification. Cys-4 carries the S-palmitoyl cysteine lipid modification. The 322-residue stretch at 33-354 folds into the G-alpha domain; it reads KECKILLLGS…TNALKDSGIL (322 aa). The segment at 36-49 is G1 motif; it reads KILLLGSGESGKST. GTP is bound by residues 41 to 48, 177 to 183, 202 to 206, 271 to 274, and Ala-326; these read GSGESGKS, LRARSKT, DVGGQ, and NKID. Residues Ser-48 and Thr-183 each coordinate Mg(2+). The tract at residues 175-183 is G2 motif; that stretch reads DVLRARSKT. Positions 198–207 are G3 motif; it reads IHLFDVGGQR. Positions 267–274 are G4 motif; that stretch reads ILFLNKID. The G5 motif stretch occupies residues 324 to 329; that stretch reads TQATDT.

The protein belongs to the G-alpha family. As to quaternary structure, g proteins are composed of 3 units; alpha, beta and gamma. The alpha chain contains the guanine nucleotide binding site.

Functionally, guanine nucleotide-binding proteins (G proteins) are involved as modulators or transducers in various transmembrane signaling systems. This subunit is involved in cAMP regulation and morphogenesis. It is essential for dimorphic switching in haploid cells. The polypeptide is Guanine nucleotide-binding protein alpha-3 subunit (FIL1) (Ustilago hordei (Barley covered smut fungus)).